Here is a 224-residue protein sequence, read N- to C-terminus: Ribonuclease 3 (224 aa).

In terms of domain architecture, RNase III spans 5–127; it reads LERLCRRLNY…ILAAIYLDGG (123 aa). Mg(2+) is bound at residue glutamate 40. The active site involves aspartate 44. Mg(2+) contacts are provided by aspartate 113 and glutamate 116. Glutamate 116 is an active-site residue. The region spanning 154–224 is the DRBM domain; sequence DAKTQLQEFL…AKAMLEQLQG (71 aa).

The protein belongs to the ribonuclease III family. Homodimer. The cofactor is Mg(2+).

Its subcellular location is the cytoplasm. The catalysed reaction is Endonucleolytic cleavage to 5'-phosphomonoester.. Its function is as follows. Digests double-stranded RNA. Involved in the processing of primary rRNA transcript to yield the immediate precursors to the large and small rRNAs (23S and 16S). Processes some mRNAs, and tRNAs when they are encoded in the rRNA operon. Processes pre-crRNA and tracrRNA of type II CRISPR loci if present in the organism. The sequence is that of Ribonuclease 3 from Legionella pneumophila (strain Paris).